The primary structure comprises 341 residues: ATPase GET3 (341 aa).

34 to 41 contributes to the ATP binding site; sequence KGGVGKTT. D63 is a catalytic residue. ATP-binding residues include E245 and N272. 2 residues coordinate Zn(2+): C283 and C286.

It belongs to the arsA ATPase family. As to quaternary structure, homodimer.

The protein resides in the cytoplasm. It is found in the endoplasmic reticulum. In terms of biological role, ATPase required for the post-translational delivery of tail-anchored (TA) proteins to the endoplasmic reticulum. Recognizes and selectively binds the transmembrane domain of TA proteins in the cytosol. This complex then targets to the endoplasmic reticulum by membrane-bound receptors, where the tail-anchored protein is released for insertion. This process is regulated by ATP binding and hydrolysis. ATP binding drives the homodimer towards the closed dimer state, facilitating recognition of newly synthesized TA membrane proteins. ATP hydrolysis is required for insertion. Subsequently, the homodimer reverts towards the open dimer state, lowering its affinity for the membrane-bound receptor, and returning it to the cytosol to initiate a new round of targeting. In Ajellomyces capsulatus (strain H143) (Darling's disease fungus), this protein is ATPase GET3.